The primary structure comprises 71 residues: Exodeoxyribonuclease 7 small subunit (71 aa).

The protein belongs to the XseB family. Heterooligomer composed of large and small subunits.

It localises to the cytoplasm. The enzyme catalyses Exonucleolytic cleavage in either 5'- to 3'- or 3'- to 5'-direction to yield nucleoside 5'-phosphates.. Bidirectionally degrades single-stranded DNA into large acid-insoluble oligonucleotides, which are then degraded further into small acid-soluble oligonucleotides. The protein is Exodeoxyribonuclease 7 small subunit of Streptococcus equi subsp. equi (strain 4047).